The sequence spans 205 residues: MTEWLISNQFTDYNHSVKFMEAKIQQIYNNLSDELVWLLQHPPLYTAGIGATDDDIIEKLFPIYKTGRGGKYTYHGPGQRIIYLMLNLKKRNKCDIKLYIRDLSNWIINVLKHFNILGEFKEDRIGIWVNNKGVEEKIAAFGIRLRKWVTYHGIALNVSPNLSHYEGIIPCGLKDYGVTSMEKLGVKVSLCELDDILKQEFHKIF.

One can recognise a BPL/LPL catalytic domain in the interval 30-205 (NLSDELVWLL…ILKQEFHKIF (176 aa)). Substrate-binding positions include 68-75 (RGGKYTYH), 140-142 (AFG), and 153-155 (GIA). Cys-171 serves as the catalytic Acyl-thioester intermediate.

Belongs to the LipB family.

The protein resides in the cytoplasm. The catalysed reaction is octanoyl-[ACP] + L-lysyl-[protein] = N(6)-octanoyl-L-lysyl-[protein] + holo-[ACP] + H(+). Its pathway is protein modification; protein lipoylation via endogenous pathway; protein N(6)-(lipoyl)lysine from octanoyl-[acyl-carrier-protein]: step 1/2. Functionally, catalyzes the transfer of endogenously produced octanoic acid from octanoyl-acyl-carrier-protein onto the lipoyl domains of lipoate-dependent enzymes. Lipoyl-ACP can also act as a substrate although octanoyl-ACP is likely to be the physiological substrate. The polypeptide is Octanoyltransferase (Wolbachia pipientis subsp. Culex pipiens (strain wPip)).